Consider the following 61-residue polypeptide: Metallothionein-1 (61 aa).

The residue at position 1 (methionine 1) is an N-acetylmethionine. Positions 1-29 (MDPNCSCATGVSCTCADSCKCKECKCTSC) are beta. Positions 5, 7, 13, 15, 19, 21, 24, 26, 29, 33, 34, 36, 37, 41, 44, 48, 50, 57, 59, and 60 each coordinate a divalent metal cation. Positions 30 to 61 (KKSCCSCCPVGCAKCAQGCVCKGASEKCNCCA) are alpha.

It belongs to the metallothionein superfamily. Type 1 family.

Its function is as follows. Metallothioneins have a high content of cysteine residues that bind various heavy metals; these proteins are transcriptionally regulated by both heavy metals and glucocorticoids. The protein is Metallothionein-1 (MT1) of Chlorocebus aethiops (Green monkey).